We begin with the raw amino-acid sequence, 546 residues long: Probable ganciclovir kinase (546 aa).

Positions 1–11 (MEQLKTPQNQK) are enriched in polar residues. The interval 1 to 29 (MEQLKTPQNQKTRPRNMLPKKKGKELKKR) is disordered. The segment covering 12–29 (TRPRNMLPKKKGKELKKR) has biased composition (basic residues). ATP is bound by residues 185 to 193 (LGSGSYGMV) and K202. D297 serves as the catalytic Proton acceptor.

Belongs to the protein kinase superfamily. Tyr protein kinase family. HCMV ganciclovir subfamily.

Phosphorylates the antiviral nucleoside analog ganciclovir. The protein is Probable ganciclovir kinase (U69) of Human herpesvirus 7 (strain JI) (HHV-7).